Here is a 238-residue protein sequence, read N- to C-terminus: Ribonuclease PH (238 aa).

Phosphate-binding positions include R86 and G124–R126.

It belongs to the RNase PH family. In terms of assembly, homohexameric ring arranged as a trimer of dimers.

The catalysed reaction is tRNA(n+1) + phosphate = tRNA(n) + a ribonucleoside 5'-diphosphate. Its function is as follows. Phosphorolytic 3'-5' exoribonuclease that plays an important role in tRNA 3'-end maturation. Removes nucleotide residues following the 3'-CCA terminus of tRNAs; can also add nucleotides to the ends of RNA molecules by using nucleoside diphosphates as substrates, but this may not be physiologically important. Probably plays a role in initiation of 16S rRNA degradation (leading to ribosome degradation) during starvation. This Anaeromyxobacter sp. (strain Fw109-5) protein is Ribonuclease PH.